The following is a 155-amino-acid chain: V-type proton ATPase 16 kDa proteolipid subunit c (155 aa).

Residues 1–10 (MSEAKSGPEY) lie on the Lumenal side of the membrane. Residues 11-33 (ASFFAVMGASAAMVFSALGAAYG) form a helical membrane-spanning segment. Residues 34–55 (TAKSGTGIAAMSVMRPEMIMKS) lie on the Cytoplasmic side of the membrane. Residues 56–76 (IIPVVMAGIIAIYGLVVAVLI) form a helical membrane-spanning segment. The Lumenal segment spans residues 77-92 (ANSLNDGISLYRSFLQ). The helical transmembrane segment at 93–114 (LGAGLSVGLSGLAAGFAIGIVG) threads the bilayer. Residues 115 to 131 (DAGVRGTAQQPRLFVGM) are Cytoplasmic-facing. The chain crosses the membrane as a helical span at residues 132 to 152 (ILILIFAEVLGLYGLIVALIL). The Lumenal portion of the chain corresponds to 153-155 (STK).

Belongs to the V-ATPase proteolipid subunit family. In terms of assembly, V-ATPase is a heteromultimeric enzyme made up of two complexes: the ATP-hydrolytic V1 complex and the proton translocation V0 complex. The V1 complex consists of three catalytic AB heterodimers that form a heterohexamer, three peripheral stalks each consisting of EG heterodimers, one central rotor including subunits D and F, and the regulatory subunits C and H. The proton translocation complex V0 consists of the proton transport subunit a, a ring of proteolipid subunits c9c'', rotary subunit d, subunits e and f, and the accessory subunits ATP6AP1/Ac45 and ATP6AP2/PRR. Interacts with the V0 complex V-ATPase subunit a4 ATP6V0A4. Interacts with LASS2. Interacts with RNF182; this interaction leads to ubiquitination and degradation via the proteasome pathway. Post-translationally, ubiquitinated by RNF182, leading to its degradation via the ubiquitin-proteasome pathway.

It localises to the cytoplasmic vesicle. The protein localises to the clathrin-coated vesicle membrane. It is found in the secretory vesicle. Its subcellular location is the synaptic vesicle membrane. Its function is as follows. Proton-conducting pore forming subunit of the V0 complex of vacuolar(H+)-ATPase (V-ATPase), a multisubunit enzyme composed of a peripheral complex (V1) that hydrolyzes ATP and a membrane integral complex (V0) that translocates protons. V-ATPase is responsible for acidifying and maintaining the pH of intracellular compartments and in some cell types, is targeted to the plasma membrane, where it is responsible for acidifying the extracellular environment. This Ovis aries (Sheep) protein is V-type proton ATPase 16 kDa proteolipid subunit c (ATP6V0C).